A 371-amino-acid chain; its full sequence is Putative glutamate--cysteine ligase 2 (371 aa).

This sequence belongs to the glutamate--cysteine ligase type 2 family. YbdK subfamily.

The enzyme catalyses L-cysteine + L-glutamate + ATP = gamma-L-glutamyl-L-cysteine + ADP + phosphate + H(+). In terms of biological role, ATP-dependent carboxylate-amine ligase which exhibits weak glutamate--cysteine ligase activity. The polypeptide is Putative glutamate--cysteine ligase 2 (Cupriavidus necator (strain ATCC 17699 / DSM 428 / KCTC 22496 / NCIMB 10442 / H16 / Stanier 337) (Ralstonia eutropha)).